A 418-amino-acid polypeptide reads, in one-letter code: Pyrophosphate--fructose 6-phosphate 1-phosphotransferase (418 aa).

Gly13 is a binding site for diphosphate. Residue Asn111 coordinates Mg(2+). Residues 139–141, 187–189, Glu244, and 295–298 each bind substrate; these read TID, MGR, and YLQR. The active-site Proton acceptor is Asp141.

Belongs to the phosphofructokinase type A (PFKA) family. PPi-dependent PFK group II subfamily. Clade 'B2' sub-subfamily. Homodimer. Requires Mg(2+) as cofactor.

The protein localises to the cytoplasm. The catalysed reaction is beta-D-fructose 6-phosphate + diphosphate = beta-D-fructose 1,6-bisphosphate + phosphate + H(+). Its pathway is carbohydrate degradation; glycolysis; D-glyceraldehyde 3-phosphate and glycerone phosphate from D-glucose: step 3/4. With respect to regulation, non-allosteric. Its function is as follows. Catalyzes the phosphorylation of D-fructose 6-phosphate, the first committing step of glycolysis. Uses inorganic phosphate (PPi) as phosphoryl donor instead of ATP like common ATP-dependent phosphofructokinases (ATP-PFKs), which renders the reaction reversible, and can thus function both in glycolysis and gluconeogenesis. Consistently, PPi-PFK can replace the enzymes of both the forward (ATP-PFK) and reverse (fructose-bisphosphatase (FBPase)) reactions. In Xanthomonas campestris pv. campestris (strain B100), this protein is Pyrophosphate--fructose 6-phosphate 1-phosphotransferase.